The chain runs to 95 residues: Large ribosomal subunit protein bL21 (95 aa).

This sequence belongs to the bacterial ribosomal protein bL21 family. Part of the 50S ribosomal subunit. Contacts protein L20.

Functionally, this protein binds to 23S rRNA in the presence of protein L20. This chain is Large ribosomal subunit protein bL21, found in Prosthecochloris vibrioformis (Chlorobium vibrioforme).